The chain runs to 134 residues: Small ribosomal subunit protein uS9c (134 aa).

This sequence belongs to the universal ribosomal protein uS9 family.

The protein localises to the plastid. Its subcellular location is the chloroplast. This chain is Small ribosomal subunit protein uS9c (rps9), found in Thalassiosira pseudonana (Marine diatom).